Consider the following 26-residue polypeptide: IRCQGSNQCYGHCREKTGCPNGKCID.

Cys-3 and Cys-24 are joined by a disulfide.

It belongs to the short scorpion toxin superfamily. Potassium channel inhibitor family. Alpha-KTx 06 subfamily. As to expression, expressed by the venom gland.

It localises to the secreted. Its function is as follows. Blocks voltage-gated potassium channels. This Opisthacanthus cayaporum (South American scorpion) protein is Potassium channel toxin alpha-KTx6 OcyKTx1.